A 48-amino-acid polypeptide reads, in one-letter code: Large ribosomal subunit protein eL40 (48 aa).

This sequence belongs to the eukaryotic ribosomal protein eL40 family.

The sequence is that of Large ribosomal subunit protein eL40 from Methanoregula boonei (strain DSM 21154 / JCM 14090 / 6A8).